Here is a 164-residue protein sequence, read N- to C-terminus: CASP-like protein 1C2 (164 aa).

Over 1 to 8 (MVKLTQRL) the chain is Cytoplasmic. The chain crosses the membrane as a helical span at residues 9–29 (GGLVLRFAAFCAALGAVIAMI). Residues 30–51 (TSRERSSFFVISLVAKYSDLAA) lie on the Extracellular side of the membrane. The helical transmembrane segment at 52–72 (FKYFVIANAIVTVYSFLVLFL) threads the bilayer. Residues 73-80 (PKESLLWK) lie on the Cytoplasmic side of the membrane. A helical membrane pass occupies residues 81–101 (FVVVLDLMVTMLLTSSLSAAV). Residues 102-129 (AVAQVGKRGNANAGWLPICGQVPRFCDQ) are Extracellular-facing. A helical transmembrane segment spans residues 130–150 (ITGALIAGLVALVLYVFLLIF). The Cytoplasmic portion of the chain corresponds to 151–164 (SIHHVVDPFLLRKS).

The protein belongs to the Casparian strip membrane proteins (CASP) family. In terms of assembly, homodimer and heterodimers.

The protein resides in the cell membrane. The protein is CASP-like protein 1C2 of Arabidopsis thaliana (Mouse-ear cress).